The primary structure comprises 372 residues: Cuticle collagen dpy-10 (372 aa).

The N-terminal stretch at 1-45 (MKNNAKEDYRTFSLTTNYSRQMIYRCVTGLQIGFSLFSFIIVCVA) is a signal peptide. Triple-helical region regions lie at residues 144–173 (GPPG…PGTT), 195–251 (GPPG…KGPT), and 259–324 (GPPG…PGVC). Residues 144–372 (GPPGPRGSSG…RAGYQGYGRK (229 aa)) form a disordered region. Residues 185–196 (EPPPCRPCPKGP) show a composition bias toward pro residues. Residues 197 to 208 (PGIKGWPGFPGD) are compositionally biased toward low complexity. Composition is skewed to gly residues over residues 237-246 (GYRGGPGAPG) and 283-292 (GLTGGQGERG). The segment covering 293-303 (WPGVSGESGEP) has biased composition (low complexity). Positions 353-363 (GYGGSRGGGDR) are enriched in gly residues.

The protein belongs to the cuticular collagen family. Collagen polypeptide chains are complexed within the cuticle by disulfide bonds and other types of covalent cross-links.

Its function is as follows. Nematode cuticles are composed largely of collagen-like proteins. The cuticle functions both as an exoskeleton and as a barrier to protect the worm from its environment. The chain is Cuticle collagen dpy-10 (dpy-10) from Caenorhabditis elegans.